Reading from the N-terminus, the 525-residue chain is MNVQRKLASTQLKPVLLGVLLATSAWSQAAPPEQARQSAPPTLSSKQYSVTSASIEALKLDPPKLPDLSGYTHAAVEAKIRRKPGGRIAAAMLQQTALKDFTGGSGRLREWIVRQGGMPHAIFIEGGYVELGQLARQLPANQFAETTPGVYVARVPIVVAPGATLHIGKNVKELRLSEERGAFLVNDGKLFITDTKLVGWSEKNNAPSAYRGPESFWAFLVSWGGTETYISRRPVASLGYNTSKAYGVSITQYTPEMHKRLKRPRPTGWLIDSVFEDIYYGFYCYEADDVVLKGNTYRDNIIYGIDPHDRSERLVIAENHVYGTKKKHGIIVSREVNNSWIINNRTHDNKLSGIVLDRNSEHNLVAYNEVYQNHSDGITLYESSNNLIWGNRLINNARHGIRMRNSVNIRIYENLSVVNQLTGIYGHIKDLSSTDRDFKLDPFDTKVSMIVVGGQLTGNGSSPISVDSPLSLELYRVEMLAPTKSSGLTFTGILEDKQEEILDLLVRRQKAVLIDPVVDLAQAEL.

The first 29 residues, 1-29, serve as a signal peptide directing secretion; the sequence is MNVQRKLASTQLKPVLLGVLLATSAWSQA. 5 PbH1 repeats span residues 287 to 309, 311 to 334, 336 to 358, 360 to 382, and 383 to 405; these read ADDV…DPHD, SERL…IVSR, VNNS…VLDR, SEHN…TLYE, and SSNN…RMRN. His308 (proton acceptor) is an active-site residue.

The protein belongs to the D-mannuronate C5-epimerase family.

Its subcellular location is the periplasm. The catalysed reaction is [(1-&gt;4)-beta-D-mannuronosyl](n) = [alginate](n). It participates in glycan biosynthesis; alginate biosynthesis. Inhibited by zinc. Catalyzes the epimerization of beta-D-mannuronate to alpha-L-guluronate during the synthesis of the linear polysaccharide alginate. In addition, is part of a periplasmic protein complex that protects alginate from degradation by AlgL by channeling the newly formed alginate polymer through a scaffold that transfers the alginate polymer through the periplasmic space to the outer membrane secretin AlgE. The protein is Mannuronan C5-epimerase AlgG of Azotobacter vinelandii.